We begin with the raw amino-acid sequence, 104 residues long: Large ribosomal subunit protein uL24 (104 aa).

This sequence belongs to the universal ribosomal protein uL24 family. As to quaternary structure, part of the 50S ribosomal subunit.

Its function is as follows. One of two assembly initiator proteins, it binds directly to the 5'-end of the 23S rRNA, where it nucleates assembly of the 50S subunit. In terms of biological role, one of the proteins that surrounds the polypeptide exit tunnel on the outside of the subunit. In Shewanella denitrificans (strain OS217 / ATCC BAA-1090 / DSM 15013), this protein is Large ribosomal subunit protein uL24.